Here is a 96-residue protein sequence, read N- to C-terminus: Protein Vpr (96 aa).

A homooligomerization region spans residues 1-42 (MEQAPEDQGPQREPYNEWTLELLEELKNEAVRHFPRIWLHSL). Residues Ser79, Ser94, and Ser96 each carry the phosphoserine; by host modification.

The protein belongs to the HIV-1 VPR protein family. As to quaternary structure, homooligomer, may form homodimer. Interacts with p6-gag region of the Pr55 Gag precursor protein through a (Leu-X-X)4 motif near the C-terminus of the P6gag protein. Interacts with host UNG. May interact with host RAD23A/HHR23A. Interacts with host VPRBP/DCAF1, leading to hijack the CUL4A-RBX1-DDB1-DCAF1/VPRBP complex, mediating ubiquitination of host proteins such as TERT and ZGPAT and arrest of the cell cycle in G2 phase. Post-translationally, phosphorylated on several residues by host. These phosphorylations regulate VPR activity for the nuclear import of the HIV-1 pre-integration complex.

It is found in the virion. It localises to the host nucleus. The protein resides in the host extracellular space. During virus replication, may deplete host UNG protein, and incude G2-M cell cycle arrest. Acts by targeting specific host proteins for degradation by the 26S proteasome, through association with the cellular CUL4A-DDB1 E3 ligase complex by direct interaction with host VPRPB/DCAF-1. Cell cycle arrest reportedly occurs within hours of infection and is not blocked by antiviral agents, suggesting that it is initiated by the VPR carried into the virion. Additionally, VPR induces apoptosis in a cell cycle dependent manner suggesting that these two effects are mechanistically linked. Detected in the serum and cerebrospinal fluid of AIDS patient, VPR may also induce cell death to bystander cells. Functionally, during virus entry, plays a role in the transport of the viral pre-integration (PIC) complex to the host nucleus. This function is crucial for viral infection of non-dividing macrophages. May act directly at the nuclear pore complex, by binding nucleoporins phenylalanine-glycine (FG)-repeat regions. In Homo sapiens (Human), this protein is Protein Vpr.